The primary structure comprises 196 residues: UPF0301 protein BF2109 (196 aa).

The protein belongs to the UPF0301 (AlgH) family.

The polypeptide is UPF0301 protein BF2109 (Bacteroides fragilis (strain ATCC 25285 / DSM 2151 / CCUG 4856 / JCM 11019 / LMG 10263 / NCTC 9343 / Onslow / VPI 2553 / EN-2)).